The chain runs to 160 residues: Nucleotide-binding protein BAV0791 (160 aa).

The protein belongs to the YajQ family.

Its function is as follows. Nucleotide-binding protein. This is Nucleotide-binding protein BAV0791 from Bordetella avium (strain 197N).